The following is a 222-amino-acid chain: Leucyl/phenylalanyl-tRNA--protein transferase (222 aa).

This sequence belongs to the L/F-transferase family.

It localises to the cytoplasm. The catalysed reaction is N-terminal L-lysyl-[protein] + L-leucyl-tRNA(Leu) = N-terminal L-leucyl-L-lysyl-[protein] + tRNA(Leu) + H(+). It carries out the reaction N-terminal L-arginyl-[protein] + L-leucyl-tRNA(Leu) = N-terminal L-leucyl-L-arginyl-[protein] + tRNA(Leu) + H(+). The enzyme catalyses L-phenylalanyl-tRNA(Phe) + an N-terminal L-alpha-aminoacyl-[protein] = an N-terminal L-phenylalanyl-L-alpha-aminoacyl-[protein] + tRNA(Phe). In terms of biological role, functions in the N-end rule pathway of protein degradation where it conjugates Leu, Phe and, less efficiently, Met from aminoacyl-tRNAs to the N-termini of proteins containing an N-terminal arginine or lysine. This Legionella pneumophila (strain Lens) protein is Leucyl/phenylalanyl-tRNA--protein transferase.